The primary structure comprises 674 residues: Probable 3',5'-cyclic-AMP phosphodiesterase pde-4 (674 aa).

A disordered region spans residues M1 to P82. Residues G15–G24 show a composition bias toward gly residues. Positions R39 to A62 are enriched in low complexity. Polar residues predominate over residues P66–S78. The 333-residue stretch at H328 to E660 folds into the PDEase domain. H407 serves as the catalytic Proton donor. Residues H411, H447, D448, and D565 each coordinate a divalent metal cation.

It belongs to the cyclic nucleotide phosphodiesterase family. Requires a divalent metal cation as cofactor. In terms of tissue distribution, expressed in dorsal D (DD) motor neurons and several other neurons at the L1 stage. Expression in DD neurons decreases gradually beginning in the late L1 stage. Highly expressed in adult ventral D (VD) motor neurons, but diminished in adult DD motor neurons.

The enzyme catalyses 3',5'-cyclic AMP + H2O = AMP + H(+). Hydrolyzes the second messenger 3',5'-cyclic AMP (cAMP), which is a key regulator of many important physiological processes. Antagonizes dorsal D (DD) motor neuron respecification by reducing levels of cAMP. This chain is Probable 3',5'-cyclic-AMP phosphodiesterase pde-4 (pde-4), found in Caenorhabditis elegans.